The following is a 226-amino-acid chain: Small ribosomal subunit protein uS5 (226 aa).

Positions 1 to 71 (MEDIKHNKKP…RKNEKRTKSE (71 aa)) are disordered. Residues 24–54 (ANPQANHANPNNRSASVNNNSVNNNKKNSSR) show a composition bias toward low complexity. In terms of domain architecture, S5 DRBM spans 72–135 (FEEKIVKISR…KMAENNVQKI (64 aa)).

The protein belongs to the universal ribosomal protein uS5 family. As to quaternary structure, part of the 30S ribosomal subunit. Contacts proteins S4 and S8.

With S4 and S12 plays an important role in translational accuracy. Its function is as follows. Located at the back of the 30S subunit body where it stabilizes the conformation of the head with respect to the body. In Mycoplasmoides gallisepticum (strain R(low / passage 15 / clone 2)) (Mycoplasma gallisepticum), this protein is Small ribosomal subunit protein uS5.